The following is a 305-amino-acid chain: Putative HTH-type transcriptional regulatory protein Saci_1344 (305 aa).

The region spanning 128 to 183 (LREKREEKNMSLGELSQRLGVSRISVYDYEKEDSYVSIEVAEKLIEIFGDEVIGDI) is the HTH cro/C1-type domain. Residues 139–158 (LGELSQRLGVSRISVYDYEK) constitute a DNA-binding region (H-T-H motif).

The polypeptide is Putative HTH-type transcriptional regulatory protein Saci_1344 (Sulfolobus acidocaldarius (strain ATCC 33909 / DSM 639 / JCM 8929 / NBRC 15157 / NCIMB 11770)).